The chain runs to 348 residues: MNVLGIETTCDETAAAIVTAAEDGRAVIRANEVLSQIAEHAAYGGVVPEIAARAHVEVVDRLIARALQEAGLGFDDLDGIAVAAGPGLIGGVLVGLVTAKTLSLVTRKPLLAVNHLEAHALTARMTDGIAFPYLLLLASGGHTQLVAVKGVGEYVRLGTTIDDAIGEAFDKAAKLLGLAYPGGPEVERAAEGGDPERFALPRPMLGRREPNFSLSGLKTALRIEAERIAPLSGQDVADLCASFQAAVVDVVVDRVRVALRAFGDVAGHPTALVAAGGVAANAALRRALSQLAGEAGLPLVAPPLPLCGDNGAMIAWAGLERLRLGLVDDITAPARPRWPFAEPLATAG.

Residues histidine 115 and histidine 119 each contribute to the Fe cation site. Substrate-binding positions include 137-141, aspartate 170, glycine 183, and asparagine 281; that span reads LASGG. Aspartate 309 contributes to the Fe cation binding site.

The protein belongs to the KAE1 / TsaD family. Fe(2+) is required as a cofactor.

It is found in the cytoplasm. It carries out the reaction L-threonylcarbamoyladenylate + adenosine(37) in tRNA = N(6)-L-threonylcarbamoyladenosine(37) in tRNA + AMP + H(+). Functionally, required for the formation of a threonylcarbamoyl group on adenosine at position 37 (t(6)A37) in tRNAs that read codons beginning with adenine. Is involved in the transfer of the threonylcarbamoyl moiety of threonylcarbamoyl-AMP (TC-AMP) to the N6 group of A37, together with TsaE and TsaB. TsaD likely plays a direct catalytic role in this reaction. This is tRNA N6-adenosine threonylcarbamoyltransferase from Methylobacterium sp. (strain 4-46).